Reading from the N-terminus, the 268-residue chain is Putative S-adenosyl-L-methionine-dependent methyltransferase MAP_0663 (268 aa).

S-adenosyl-L-methionine contacts are provided by residues aspartate 124 and 153 to 154; that span reads DL.

This sequence belongs to the UPF0677 family.

Functionally, exhibits S-adenosyl-L-methionine-dependent methyltransferase activity. The polypeptide is Putative S-adenosyl-L-methionine-dependent methyltransferase MAP_0663 (Mycolicibacterium paratuberculosis (strain ATCC BAA-968 / K-10) (Mycobacterium paratuberculosis)).